A 185-amino-acid chain; its full sequence is Transcription factor bHLH109 (185 aa).

The region spanning 67–117 is the bHLH domain; that stretch reads RSMEYRMMMEKKRRKEIKDKVDILQGLMPNHCTKPDLASKLENIIEYIKSL.

This sequence belongs to the bHLH protein family. In terms of assembly, homodimer.

The protein localises to the nucleus. Its function is as follows. Transcription factor involved in somatic embryogenesis. Acts as a positive regulator of somatic embryo formation. Acts as a positive regulator of ECP63 by targeting its promoter and inducing its expression. The protein is Transcription factor bHLH109 (BHLH109) of Arabidopsis thaliana (Mouse-ear cress).